The sequence spans 108 residues: Nascent polypeptide-associated complex protein (108 aa).

Positions 1-68 (MNPREIRRMM…LREVKKEVEQ (68 aa)) constitute an NAC-A/B domain.

The protein belongs to the NAC-alpha family. As to quaternary structure, homodimer. Interacts with the ribosome. Binds ribosomal RNA.

Its function is as follows. Contacts the emerging nascent chain on the ribosome. The chain is Nascent polypeptide-associated complex protein from Picrophilus torridus (strain ATCC 700027 / DSM 9790 / JCM 10055 / NBRC 100828 / KAW 2/3).